Consider the following 107-residue polypeptide: uncharacterized protein (107 aa).

In terms of domain architecture, Glutaredoxin spans 6 to 107 (KARIDQLVTA…QEMLEVALAS (102 aa)). Lysine 23 is a binding site for glutathione. Cysteine 31 contributes to the [2Fe-2S] cluster binding site. Glutathione-binding positions include arginine 60 and 85–86 (SD).

Belongs to the glutaredoxin family. Monothiol subfamily.

This is an uncharacterized protein from Synechocystis sp. (strain ATCC 27184 / PCC 6803 / Kazusa).